A 345-amino-acid polypeptide reads, in one-letter code: Phosphate acyltransferase (345 aa).

The protein belongs to the PlsX family. Homodimer. Probably interacts with PlsY.

The protein resides in the cytoplasm. It carries out the reaction a fatty acyl-[ACP] + phosphate = an acyl phosphate + holo-[ACP]. It functions in the pathway lipid metabolism; phospholipid metabolism. Functionally, catalyzes the reversible formation of acyl-phosphate (acyl-PO(4)) from acyl-[acyl-carrier-protein] (acyl-ACP). This enzyme utilizes acyl-ACP as fatty acyl donor, but not acyl-CoA. The sequence is that of Phosphate acyltransferase from Thermodesulfovibrio yellowstonii (strain ATCC 51303 / DSM 11347 / YP87).